A 630-amino-acid polypeptide reads, in one-letter code: Triacylglycerol lipase ptl2 (630 aa).

Residues 251-442 enclose the PNPLA domain; that stretch reads LCLSGGASFA…RTDIPLSELR (192 aa). Positions 282 to 286 match the GXSXG motif; it reads GTSGG. The Nucleophile role is filled by S284. The Proton acceptor role is filled by D429.

It belongs to the PLPL family.

It is found in the lipid droplet. It carries out the reaction a triacylglycerol + H2O = a diacylglycerol + a fatty acid + H(+). Lipid particle-localized triacylglycerol (TAG) lipase. The lipid droplet/particle is a lipid storage compartment which serves as a depot of energy and building blocks for membrane lipid biosynthesis. Involved in the mobilization of the non-polar storage lipids triacylglycerols (TAGs) from lipid particles by hydrolysis of TAGs, releasing and supplying specific fatty acids to the appropriate metabolic pathways. The chain is Triacylglycerol lipase ptl2 (ptl2) from Schizosaccharomyces pombe (strain 972 / ATCC 24843) (Fission yeast).